The following is a 572-amino-acid chain: Proline--tRNA ligase (572 aa).

This sequence belongs to the class-II aminoacyl-tRNA synthetase family. ProS type 1 subfamily. In terms of assembly, homodimer.

The protein resides in the cytoplasm. It carries out the reaction tRNA(Pro) + L-proline + ATP = L-prolyl-tRNA(Pro) + AMP + diphosphate. Functionally, catalyzes the attachment of proline to tRNA(Pro) in a two-step reaction: proline is first activated by ATP to form Pro-AMP and then transferred to the acceptor end of tRNA(Pro). As ProRS can inadvertently accommodate and process non-cognate amino acids such as alanine and cysteine, to avoid such errors it has two additional distinct editing activities against alanine. One activity is designated as 'pretransfer' editing and involves the tRNA(Pro)-independent hydrolysis of activated Ala-AMP. The other activity is designated 'posttransfer' editing and involves deacylation of mischarged Ala-tRNA(Pro). The misacylated Cys-tRNA(Pro) is not edited by ProRS. This chain is Proline--tRNA ligase, found in Leuconostoc mesenteroides subsp. mesenteroides (strain ATCC 8293 / DSM 20343 / BCRC 11652 / CCM 1803 / JCM 6124 / NCDO 523 / NBRC 100496 / NCIMB 8023 / NCTC 12954 / NRRL B-1118 / 37Y).